The sequence spans 233 residues: Probable cyclic nucleotide phosphodiesterase COSY_0614 (233 aa).

Positions 10, 12, 48, 78, 144, 183, and 185 each coordinate Fe cation. AMP contacts are provided by residues His12, Asp48, and 78-79 (NH). His185 serves as a coordination point for AMP.

Belongs to the cyclic nucleotide phosphodiesterase class-III family. Fe(2+) serves as cofactor.

The protein is Probable cyclic nucleotide phosphodiesterase COSY_0614 of Vesicomyosocius okutanii subsp. Calyptogena okutanii (strain HA).